A 918-amino-acid polypeptide reads, in one-letter code: MLTLQTWLVQALFIFLTTESTGELLDPCGYISPESPVVQLHSNFTAVCVLKEKCMDYFHVNANYIVWKTNHFTIPKEQYTIINRTASSVTFTDIASLNIQLTCNILTFGQLEQNVYGITIISGLPPEKPKNLSCIVNEGKKMRCEWDGGRETHLETNFTLKSEWATHKFADCKAKRDTPTSCTVDYSTVYFVNIEVWVEAENALGKVTSDHINFDPVYKVKPNPPHNLSVINSEELSSILKLTWTNPSIKSVIILKYNIQYRTKDASTWSQIPPEDTASTRSSFTVQDLKPFTEYVFRIRCMKEDGKGYWSDWSEEASGITYEDRPSKAPSFWYKIDPSHTQGYRTVQLVWKTLPPFEANGKILDYEVTLTRWKSHLQNYTVNATKLTVNLTNDRYLATLTVRNLVGKSDAAVLTIPACDFQATHPVMDLKAFPKDNMLWVEWTTPRESVKKYILEWCVLSDKAPCITDWQQEDGTVHRTYLRGNLAESKCYLITVTPVYADGPGSPESIKAYLKQAPPSKGPTVRTKKVGKNEAVLEWDQLPVDVQNGFIRNYTIFYRTIIGNETAVNVDSSHTEYTLSSLTSDTLYMVRMAAYTDEGGKDGPEFTFTTPKFAQGEIEAIVVPVCLAFLLTTLLGVLFCFNKRDLIKKHIWPNVPDPSKSHIAQWSPHTPPRHNFNSKDQMYSDGNFTDVSVVEIEANDKKPFPEDLKSLDLFKKEKINTEGHSSGIGGSSCMSSSRPSISSSDENESSQNTSSTVQYSTVVHSGYRHQVPSVQVFSRSESTQPLLDSEERPEDLQLVDHVDGGDGILPRQQYFKQNCSQHESSPDISHFERSKQVSSVNEEDFVRLKQQISDHISQSCGSGQMKMFQEVSAADAFGPGTEGQVERFETVGMEAATDEGMPKSYLPQTVRQGGYMPQ.

The signal sequence occupies residues 1 to 22; sequence MLTLQTWLVQALFIFLTTESTG. The Extracellular segment spans residues 23-619; sequence ELLDPCGYIS…TPKFAQGEIE (597 aa). The Ig-like C2-type domain maps to 26-120; sequence DPCGYISPES…LEQNVYGITI (95 aa). 2 disulfides stabilise this stretch: cysteine 28/cysteine 54 and cysteine 48/cysteine 103. Residues asparagine 43, asparagine 83, and asparagine 131 are each glycosylated (N-linked (GlcNAc...) asparagine). Fibronectin type-III domains are found at residues 125-216, 224-324, 329-424, 426-517, and 518-613; these read PPEK…NFDP, PPHN…TYED, APSF…FQAT, PVMD…LKQA, and PPSK…TPKF. A disulfide bridge connects residues cysteine 134 and cysteine 144. Asparagine 157 is a glycosylation site (N-linked (GlcNAc...) asparagine). A disulfide bridge links cysteine 172 with cysteine 182. N-linked (GlcNAc...) asparagine glycosylation is present at asparagine 227. The WSXWS motif signature appears at 310-314; sequence WSDWS. N-linked (GlcNAc...) asparagine glycosylation is found at asparagine 379 and asparagine 383. Residue asparagine 390 is glycosylated (N-linked (GlcNAc...) (complex) asparagine). Cysteine 458 and cysteine 466 are oxidised to a cystine. 2 N-linked (GlcNAc...) asparagine glycosylation sites follow: asparagine 553 and asparagine 564. Residues 620 to 641 form a helical membrane-spanning segment; it reads AIVVPVCLAFLLTTLLGVLFCF. Residues 642–918 lie on the Cytoplasmic side of the membrane; the sequence is NKRDLIKKHI…TVRQGGYMPQ (277 aa). The short motif at 651 to 659 is the Box 1 motif element; sequence IWPNVPDPS. Disordered regions lie at residues 660 to 681 and 722 to 758; these read KSHI…SKDQ and EGHS…STVQ. 2 positions are modified to phosphoserine: serine 661 and serine 667. Residues 731–755 show a composition bias toward low complexity; that stretch reads SSCMSSSRPSISSSDENESSQNTSS. Phosphoserine occurs at positions 782, 789, 829, and 839.

The protein belongs to the type I cytokine receptor family. Type 2 subfamily. As to quaternary structure, component of a hexamer of two molecules each of IL6, IL6R and IL6ST; associates with the complex IL6:IL6R but does not interact with IL6. Forms heterodimers composed of LIFR and IL6ST (type I OSM receptor) which are activated by LIF and OSM. Also forms heterodimers composed of OSMR and IL6ST (type II receptor) which are activated by OSM but not by LIF. Component of a receptor complex composed of IL6ST/GP130, IL27RA/WSX1 and CNTFR which interacts with the neuroprotective peptide humanin. Interacts with HCK. Interacts with INPP5D/SHIP1. Interacts with SRC and YES. Interacts with ARMH4; this interaction prevents IL6ST protein homodimerization and bridges ARMH4 with IL6R and STAT3 and therefore inhibits phosphorylation of STAT3 at 'Tyr-705'. In terms of assembly, (Microbial infection) The homodimer binds two molecules of herpes virus 8/HHV-8 protein vIL-6. Phosphorylation of Ser-782 down-regulates cell surface expression. In terms of processing, heavily N-glycosylated. Glycosylation is required for protein stability and localization in plasma membrane but not for ligand binding. Found in all the tissues and cell lines examined. Expression not restricted to IL6 responsive cells. In terms of tissue distribution, expressed in blood serum (at protein level).

The protein localises to the cell membrane. It is found in the secreted. In terms of biological role, signal-transducing molecule. The receptor systems for IL6, LIF, OSM, CNTF, IL11, CTF1 and BSF3 can utilize IL6ST for initiating signal transmission. Binding of IL6 to IL6R induces IL6ST homodimerization and formation of a high-affinity receptor complex, which activates the intracellular JAK-MAPK and JAK-STAT3 signaling pathways. That causes phosphorylation of IL6ST tyrosine residues which in turn activates STAT3. In parallel, the IL6 signaling pathway induces the expression of two cytokine receptor signaling inhibitors, SOCS1 and SOCS3, which inhibit JAK and terminate the activity of the IL6 signaling pathway as a negative feedback loop. Also activates the yes-associated protein 1 (YAP) and NOTCH pathways to control inflammation-induced epithelial regeneration, independently of STAT3. Acts as a receptor for the neuroprotective peptide humanin as part of a complex with IL27RA/WSX1 and CNTFR. Mediates signals which regulate immune response, hematopoiesis, pain control and bone metabolism. Has a role in embryonic development. Essential for survival of motor and sensory neurons and for differentiation of astrocytes. Required for expression of TRPA1 in nociceptive neurons. Required for the maintenance of PTH1R expression in the osteoblast lineage and for the stimulation of PTH-induced osteoblast differentiation. Required for normal trabecular bone mass and cortical bone composition. Binds to the soluble IL6:sIL6R complex (hyper-IL6), thereby blocking IL6 trans-signaling. Inhibits sIL6R-dependent acute phase response. Also blocks IL11 cluster signaling through IL11R. The protein is Interleukin-6 receptor subunit beta of Homo sapiens (Human).